The following is an 83-amino-acid chain: Small ribosomal subunit protein uS17 (83 aa).

It belongs to the universal ribosomal protein uS17 family. As to quaternary structure, part of the 30S ribosomal subunit.

Functionally, one of the primary rRNA binding proteins, it binds specifically to the 5'-end of 16S ribosomal RNA. The protein is Small ribosomal subunit protein uS17 of Francisella tularensis subsp. holarctica (strain FTNF002-00 / FTA).